Consider the following 29-residue polypeptide: Cyclotide mden-B (29 aa).

Positions 1-29 form a cross-link, cyclopeptide (Gly-Asn); the sequence is GLPICGETCFTGKCYTPGCTCSYPICKKN. Disulfide bonds link cysteine 5-cysteine 19, cysteine 9-cysteine 21, and cysteine 14-cysteine 26.

This sequence belongs to the cyclotide family. Moebius subfamily. Post-translationally, this is a cyclic peptide.

Probably participates in a plant defense mechanism. In Melicytus dentatus (Tree violet), this protein is Cyclotide mden-B.